The sequence spans 108 residues: Thiosulfate sulfurtransferase GlpE (108 aa).

In terms of domain architecture, Rhodanese spans 17–105 (QEKEAVLVDI…WQRQFPAEVA (89 aa)). The active-site Cysteine persulfide intermediate is cysteine 65.

Belongs to the GlpE family.

The protein resides in the cytoplasm. It carries out the reaction thiosulfate + hydrogen cyanide = thiocyanate + sulfite + 2 H(+). The enzyme catalyses thiosulfate + [thioredoxin]-dithiol = [thioredoxin]-disulfide + hydrogen sulfide + sulfite + 2 H(+). In terms of biological role, transferase that catalyzes the transfer of sulfur from thiosulfate to thiophilic acceptors such as cyanide or dithiols. May function in a CysM-independent thiosulfate assimilation pathway by catalyzing the conversion of thiosulfate to sulfite, which can then be used for L-cysteine biosynthesis. This chain is Thiosulfate sulfurtransferase GlpE, found in Escherichia coli O127:H6 (strain E2348/69 / EPEC).